The sequence spans 812 residues: Plasminogen (812 aa).

Residues M1–G19 form the signal peptide. A PAN domain is found at D20 to V98. 21 disulfides stabilise this stretch: C49/C73, C53/C61, C103/C181, C124/C164, C152/C176, C185/C262, C188/C316, C206/C245, C234/C257, C275/C352, C296/C335, C324/C347, C376/C454, C397/C437, C425/C449, C481/C560, C502/C543, C531/C555, C568/C687, C578/C586, and C609/C625. Kringle domains lie at E102–C181, E184–C262, Q274–C352, E375–C454, and D480–C560. The region spanning V582–R810 is the Peptidase S1 domain. S598 carries the phosphoserine modification. Catalysis depends on charge relay system residues H624 and D667. Position 690 is a phosphoserine (S690). Disulfide bonds link C701-C768, C731-C747, and C758-C786. S762 (charge relay system) is an active-site residue.

Belongs to the peptidase S1 family. Plasminogen subfamily. In terms of assembly, interacts (both mature PLG and the angiostatin peptide) with AMOT and CSPG4. Interacts (via the Kringle domains) with HRG; the interaction tethers PLG to the cell surface and enhances its activation. Interacts (via Kringle 4 domain) with ADA; the interaction stimulates PLG activation when in complex with DPP4. Angiostatin: Interacts with ATP5F1A; the interaction inhibits most of the angiogenic effects of angiostatin. Post-translationally, in the presence of the inhibitor, the activation involves only cleavage after Arg-581, yielding two chains held together by two disulfide bonds. In the absence of the inhibitor, the activation involves additionally the removal of the activation peptide.

It localises to the secreted. The enzyme catalyses Preferential cleavage: Lys-|-Xaa &gt; Arg-|-Xaa, higher selectivity than trypsin. Converts fibrin into soluble products.. Its activity is regulated as follows. Converted into plasmin by plasminogen activators, both plasminogen and its activator being bound to fibrin. Cannot be activated with streptokinase. Functionally, plasmin dissolves the fibrin of blood clots and acts as a proteolytic factor in a variety of other processes including embryonic development, tissue remodeling, tumor invasion, and inflammation. In ovulation, weakens the walls of the Graafian follicle. It activates the urokinase-type plasminogen activator, collagenases and several complement zymogens, such as C1, C4 and C5. Cleavage of fibronectin and laminin leads to cell detachment and apoptosis. Also cleaves fibrin, thrombospondin and von Willebrand factor. Its role in tissue remodeling and tumor invasion may be modulated by CSPG4. Binds to cells. Its function is as follows. Angiostatin is an angiogenesis inhibitor that blocks neovascularization and growth of experimental primary and metastatic tumors in vivo. In Rattus norvegicus (Rat), this protein is Plasminogen (Plg).